The primary structure comprises 125 residues: Small ribosomal subunit protein uS12 (125 aa).

Residues 1–27 (MPTINQLVRKGREKGEQKSTAPALKSC) form a disordered region. Residue aspartate 89 is modified to 3-methylthioaspartic acid. The disordered stretch occupies residues 103-125 (DASGVQKRNQGRSKYGTKRPKKK). Residues 111–125 (NQGRSKYGTKRPKKK) are compositionally biased toward basic residues.

It belongs to the universal ribosomal protein uS12 family. As to quaternary structure, part of the 30S ribosomal subunit. Contacts proteins S8 and S17. May interact with IF1 in the 30S initiation complex.

Its function is as follows. With S4 and S5 plays an important role in translational accuracy. Interacts with and stabilizes bases of the 16S rRNA that are involved in tRNA selection in the A site and with the mRNA backbone. Located at the interface of the 30S and 50S subunits, it traverses the body of the 30S subunit contacting proteins on the other side and probably holding the rRNA structure together. The combined cluster of proteins S8, S12 and S17 appears to hold together the shoulder and platform of the 30S subunit. The sequence is that of Small ribosomal subunit protein uS12 from Syntrophomonas wolfei subsp. wolfei (strain DSM 2245B / Goettingen).